Reading from the N-terminus, the 174-residue chain is UPF0398 protein LACR_0544 (174 aa).

It belongs to the UPF0398 family.

The sequence is that of UPF0398 protein LACR_0544 from Lactococcus lactis subsp. cremoris (strain SK11).